We begin with the raw amino-acid sequence, 356 residues long: Tyrosine recombinase XerS (356 aa).

The region spanning 16–121 is the Core-binding (CB) domain; that stretch reads IMPWYVLDYY…ALSSLYKYLT (106 aa). One can recognise a Tyr recombinase domain in the interval 169–354; that stretch reads AFLDYVDKEY…VNDEQKNALD (186 aa). Residues Arg210, Lys234, His306, Arg309, and His332 contribute to the active site. Tyr341 functions as the O-(3'-phospho-DNA)-tyrosine intermediate in the catalytic mechanism.

The protein belongs to the 'phage' integrase family. XerS subfamily.

Its subcellular location is the cytoplasm. With respect to regulation, ftsK is required for recombination. Site-specific tyrosine recombinase, which acts by catalyzing the cutting and rejoining of the recombining DNA molecules. Essential to convert dimers of the bacterial chromosome into monomers to permit their segregation at cell division. This is Tyrosine recombinase XerS from Streptococcus pyogenes serotype M2 (strain MGAS10270).